The primary structure comprises 280 residues: 4-deoxy-L-threo-5-hexosulose-uronate ketol-isomerase (280 aa).

Zn(2+) contacts are provided by histidine 198, histidine 200, glutamate 205, and histidine 247.

Belongs to the KduI family. Requires Zn(2+) as cofactor.

Its subcellular location is the cytoplasm. It catalyses the reaction 5-dehydro-4-deoxy-D-glucuronate = 3-deoxy-D-glycero-2,5-hexodiulosonate. Functionally, isomerase involved in ulvan degradation. Ulvan is the main polysaccharide component of the Ulvales (green seaweed) cell wall. It is composed of disaccharide building blocks comprising 3-sulfated rhamnose (Rha3S) linked to D-glucuronic acid (GlcA), L-iduronic acid (IduA), or D-xylose (Xyl). Catalyzes the isomerization of 5-dehydro-4-deoxy-D-glucuronate to 3-deoxy-D-glycero-2,5-hexodiulosonate. This Formosa agariphila (strain DSM 15362 / KCTC 12365 / LMG 23005 / KMM 3901 / M-2Alg 35-1) protein is 4-deoxy-L-threo-5-hexosulose-uronate ketol-isomerase.